A 187-amino-acid polypeptide reads, in one-letter code: Rusticyanin (187 aa).

The signal sequence occupies residues 1-32; sequence MYTQNTMKKNWYVTVGAAAALAATVGMGTAMA. The Plastocyanin-like domain occupies 85–187; it reads SFEVHDKKNP…TGMFGKIVVK (103 aa). The Cu cation site is built by H117, C170, H175, and M180.

Monomer. Requires Cu cation as cofactor.

Its subcellular location is the periplasm. Its function is as follows. Electron carrier from cytochrome c552 to the A-type oxidase. The sequence is that of Rusticyanin (rus) from Acidithiobacillus ferrooxidans (strain ATCC 23270 / DSM 14882 / CIP 104768 / NCIMB 8455) (Ferrobacillus ferrooxidans (strain ATCC 23270)).